Consider the following 105-residue polypeptide: Putative membrane protein insertion efficiency factor (105 aa).

A disordered region spans residues 68-105; the sequence is FHPGGLDPVPPRRNESGTEISDARPGSDGEASPGAPGL. Residues 77-94 are compositionally biased toward basic and acidic residues; that stretch reads PPRRNESGTEISDARPGS.

Belongs to the UPF0161 family.

The protein resides in the cell membrane. Its function is as follows. Could be involved in insertion of integral membrane proteins into the membrane. The polypeptide is Putative membrane protein insertion efficiency factor (Thermobifida fusca (strain YX)).